A 393-amino-acid polypeptide reads, in one-letter code: NADH-quinone oxidoreductase subunit D (393 aa).

Belongs to the complex I 49 kDa subunit family. As to quaternary structure, NDH-1 is composed of 14 different subunits. Subunits NuoB, C, D, E, F, and G constitute the peripheral sector of the complex.

It is found in the cell inner membrane. It catalyses the reaction a quinone + NADH + 5 H(+)(in) = a quinol + NAD(+) + 4 H(+)(out). Its function is as follows. NDH-1 shuttles electrons from NADH, via FMN and iron-sulfur (Fe-S) centers, to quinones in the respiratory chain. The immediate electron acceptor for the enzyme in this species is believed to be ubiquinone. Couples the redox reaction to proton translocation (for every two electrons transferred, four hydrogen ions are translocated across the cytoplasmic membrane), and thus conserves the redox energy in a proton gradient. In Ehrlichia canis (strain Jake), this protein is NADH-quinone oxidoreductase subunit D.